The chain runs to 697 residues: Elongation factor G (697 aa).

Residues 8–290 (ERYRNFGIMA…AVVDYLPSPL (283 aa)) form the tr-type G domain. GTP-binding positions include 17–24 (AHIDAGKT), 88–92 (DTPGH), and 142–145 (NKLD).

This sequence belongs to the TRAFAC class translation factor GTPase superfamily. Classic translation factor GTPase family. EF-G/EF-2 subfamily.

It localises to the cytoplasm. Its function is as follows. Catalyzes the GTP-dependent ribosomal translocation step during translation elongation. During this step, the ribosome changes from the pre-translocational (PRE) to the post-translocational (POST) state as the newly formed A-site-bound peptidyl-tRNA and P-site-bound deacylated tRNA move to the P and E sites, respectively. Catalyzes the coordinated movement of the two tRNA molecules, the mRNA and conformational changes in the ribosome. This Sphingopyxis alaskensis (strain DSM 13593 / LMG 18877 / RB2256) (Sphingomonas alaskensis) protein is Elongation factor G.